Consider the following 232-residue polypeptide: Endonuclease V (232 aa).

Mg(2+)-binding residues include Asp43 and Asp109.

It belongs to the endonuclease V family. It depends on Mg(2+) as a cofactor.

The protein resides in the cytoplasm. It catalyses the reaction Endonucleolytic cleavage at apurinic or apyrimidinic sites to products with a 5'-phosphate.. Its function is as follows. DNA repair enzyme involved in the repair of deaminated bases. Selectively cleaves double-stranded DNA at the second phosphodiester bond 3' to a deoxyinosine leaving behind the intact lesion on the nicked DNA. The protein is Endonuclease V of Thermofilum pendens (strain DSM 2475 / Hrk 5).